The following is a 116-amino-acid chain: Non-specific lipid-transfer protein D, cotyledon-specific isoform (116 aa).

The signal sequence occupies residues 1–24 (MKNIFFSVFFLLSFLLCLANVSEA). Cystine bridges form between cysteine 28–cysteine 76, cysteine 38–cysteine 53, cysteine 54–cysteine 98, and cysteine 74–cysteine 112.

Belongs to the plant LTP family.

Its function is as follows. Plant non-specific lipid-transfer proteins transfer phospholipids as well as galactolipids across membranes. May play a role in wax or cutin deposition in the cell walls of expanding epidermal cells and certain secretory tissues. This is Non-specific lipid-transfer protein D, cotyledon-specific isoform from Ricinus communis (Castor bean).